The following is a 586-amino-acid chain: Arginine--tRNA ligase (586 aa).

The 'HIGH' region signature appears at 128–138 (ANPTGPLHVGH).

The protein belongs to the class-I aminoacyl-tRNA synthetase family. Monomer.

It is found in the cytoplasm. The catalysed reaction is tRNA(Arg) + L-arginine + ATP = L-arginyl-tRNA(Arg) + AMP + diphosphate. This is Arginine--tRNA ligase from Coxiella burnetii (strain RSA 331 / Henzerling II).